The following is a 512-amino-acid chain: Proline--tRNA ligase (512 aa).

Residues 460–470 (SDEDDEQDTTD) show a composition bias toward acidic residues. Residues 460–484 (SDEDDEQDTTDENMGVNNDTTVESN) are disordered.

It belongs to the class-II aminoacyl-tRNA synthetase family. ProS type 3 subfamily. As to quaternary structure, homodimer.

The protein localises to the cytoplasm. It catalyses the reaction tRNA(Pro) + L-proline + ATP = L-prolyl-tRNA(Pro) + AMP + diphosphate. In terms of biological role, catalyzes the attachment of proline to tRNA(Pro) in a two-step reaction: proline is first activated by ATP to form Pro-AMP and then transferred to the acceptor end of tRNA(Pro). The protein is Proline--tRNA ligase of Haloquadratum walsbyi (strain DSM 16790 / HBSQ001).